A 112-amino-acid polypeptide reads, in one-letter code: Putative pterin-4-alpha-carbinolamine dehydratase (112 aa).

It belongs to the pterin-4-alpha-carbinolamine dehydratase family.

It catalyses the reaction (4aS,6R)-4a-hydroxy-L-erythro-5,6,7,8-tetrahydrobiopterin = (6R)-L-erythro-6,7-dihydrobiopterin + H2O. The protein is Putative pterin-4-alpha-carbinolamine dehydratase of Shewanella piezotolerans (strain WP3 / JCM 13877).